A 427-amino-acid polypeptide reads, in one-letter code: Vitamin D3 receptor (427 aa).

Positions 21–96 form a DNA-binding region, nuclear receptor; it reads PRICGVCGDR…IGMMKEFILT (76 aa). 8 residues coordinate Zn(2+): Cys-24, Cys-27, Cys-41, Cys-44, Cys-60, Cys-66, Cys-76, and Cys-79. 2 consecutive NR C4-type zinc fingers follow at residues 24-44 and 60-84; these read CGVC…CEGC and CPFN…LKRC. The interval 97 to 126 is hinge; sequence DEEVQRKREMILKRKEEEALKDSLRPKLSE. The 297-residue stretch at 127 to 423 folds into the NR LBD domain; it reads EQQRIIAILL…LTPLVLEVFG (297 aa). Residue Tyr-143 coordinates calcitriol. Residues 158 to 183 are disordered; the sequence is RVNDGGGSHPSRPNSRHTPSFSGDSS. Ser-237 contributes to the calcitriol binding site. Positions 246-264 are interaction with coactivator LXXLL motif; sequence KMIPGFRDLTSEDQIVLLK. Calcitriol is bound by residues Arg-274, Ser-278, His-305, and His-397. Residues 416-424 carry the 9aaTAD motif; the sequence is PLVLEVFGN.

Belongs to the nuclear hormone receptor family. NR1 subfamily. As to quaternary structure, homodimer in the absence of bound vitamin D3. Heterodimer with RXRA after vitamin D3 binding. Interacts with MED1, NCOA1, NCOA2, NCOA3 and NCOA6 coactivators, leading to a strong increase of transcription of target genes. Interacts with the corepressor NCOR1. Interacts with SNW1. Interacts with IRX4, the interaction does not affect its transactivation activity. Post-translationally, ubiquitinated by UBR5, leading to its degradation: UBR5 specifically recognizes and binds ligand-bound VDR when it is not associated with coactivators (NCOAs). In presence of NCOAs, the UBR5-degron is not accessible, preventing its ubiquitination and degradation.

The protein localises to the nucleus. It localises to the cytoplasm. Its function is as follows. Nuclear receptor for calcitriol, the active form of vitamin D3 which mediates the action of this vitamin on cells. Enters the nucleus upon vitamin D3 binding where it forms heterodimers with the retinoid X receptor/RXR. The VDR-RXR heterodimers bind to specific response elements on DNA and activate the transcription of vitamin D3-responsive target genes. Plays a central role in calcium homeostasis. This chain is Vitamin D3 receptor (VDR), found in Saguinus oedipus (Cotton-top tamarin).